A 1574-amino-acid polypeptide reads, in one-letter code: Disco-interacting protein 2 homolog B (1574 aa).

A phosphoserine mark is found at S9, S50, and S53. The DMAP1-binding domain occupies 12 to 130; sequence AVAALPPEVR…PMPTKRRSTF (119 aa). The interval 31-166 is disordered; the sequence is LSEGDITQKG…AALSAALQQS (136 aa). Residues 52–62 are compositionally biased toward polar residues; sequence YSPQTQETDSI. Over residues 69 to 82 the composition is skewed to low complexity; sequence QTPAPTAAQTSAPS. Position 70 is a phosphothreonine (T70). The span at 91–103 shows a compositional bias: basic and acidic residues; that stretch reads GARDERYRSDIHT. S99 carries the phosphoserine modification. Residue T139 is modified to Phosphothreonine. Phosphoserine is present on residues S145, S147, and S152. The segment covering 154-166 has biased composition (low complexity); that stretch reads RRQAALSAALQQS. 3 positions are modified to phosphoserine: S177, S192, and S202. The tract at residues 178 to 200 is disordered; it reads IQGSSTSSSASSTLSHGEVKGTS. A compositionally biased stretch (low complexity) spans 181-192; that stretch reads SSTSSSASSTLS. The interval 217–244 is disordered; sequence APPDVTATTSSSSSSLRPANIDLPPSGI. A Phosphoserine modification is found at S256.

Belongs to the DIP2 family. As to quaternary structure, interacts with alpha-tubulin. In terms of tissue distribution, highly expressed in brain and spinal cord (at protein level). In brain, expression is detected in the main olfactory bulb, cortex, lateral ventricle, cornu ammonis 1, cornu ammonis 3, dentate gyrus, striatum, cerebellar cortex and medial habenula. Expressed primarily in neurons including excitatory pyramidal neurons and inhibitory interneurons.

Its subcellular location is the cell projection. It is found in the dendrite. The protein localises to the axon. The protein resides in the perikaryon. Negatively regulates axonal outgrowth and is essential for normal synaptic transmission. Not required for regulation of axon polarity. Promotes acetylation of alpha-tubulin. In Mus musculus (Mouse), this protein is Disco-interacting protein 2 homolog B (Dip2b).